The sequence spans 350 residues: UPF0284 protein MJ1598 (350 aa).

It belongs to the UPF0284 family.

In Methanocaldococcus jannaschii (strain ATCC 43067 / DSM 2661 / JAL-1 / JCM 10045 / NBRC 100440) (Methanococcus jannaschii), this protein is UPF0284 protein MJ1598.